Here is a 101-residue protein sequence, read N- to C-terminus: MEKIGIDTAFAEPGVRLSINLRERCRMHDLNEALDDLRAVIPYAHGGSVRKLSKIATLLLAKNHIIMQAKAIEELSILVSQLKRKSENLENLNKSLKPDAN.

The segment at 14–27 (GVRLSINLRERCRM) is basic motif. Residues 14–68 (GVRLSINLRERCRMHDLNEALDDLRAVIPYAHGGSVRKLSKIATLLLAKNHIIMQ) enclose the bHLH domain. The interval 28–68 (HDLNEALDDLRAVIPYAHGGSVRKLSKIATLLLAKNHIIMQ) is helix-loop-helix motif.

As to expression, expressed in neuronal tissues of the head, including sheath cells of the cephalic sensilla (CEPsh) glia.

Its subcellular location is the nucleus. In terms of biological role, probable transcription factor that regulates the expression of dopamine receptors dop-1, dop-2 and dop-3 and thus dopamine-dependent behaviors. May act redundantly with hlh-31 and hlh-32 to regulate ventral CEPsh glia functions. May play a role in chemotactic responses in larvae. The sequence is that of Helix-loop-helix protein 17 from Caenorhabditis elegans.